Here is a 224-residue protein sequence, read N- to C-terminus: Ribose-5-phosphate isomerase A 1 (224 aa).

Substrate-binding positions include 29–32, 85–88, and 98–101; these read SGST, DGAD, and KGGG. The Proton acceptor role is filled by Glu107. Lys125 serves as a coordination point for substrate.

It belongs to the ribose 5-phosphate isomerase family. As to quaternary structure, homodimer.

It catalyses the reaction aldehydo-D-ribose 5-phosphate = D-ribulose 5-phosphate. Its pathway is carbohydrate degradation; pentose phosphate pathway; D-ribose 5-phosphate from D-ribulose 5-phosphate (non-oxidative stage): step 1/1. In terms of biological role, catalyzes the reversible conversion of ribose-5-phosphate to ribulose 5-phosphate. The protein is Ribose-5-phosphate isomerase A 1 of Oceanobacillus iheyensis (strain DSM 14371 / CIP 107618 / JCM 11309 / KCTC 3954 / HTE831).